The primary structure comprises 221 residues: Casparian strip membrane protein 2 (221 aa).

Positions 1 to 21 (MEKSEATTIEIGETSRESKGK) are disordered. Topologically, residues 1 to 41 (MEKSEATTIEIGETSRESKGKTPLLAEVEQTARTAGSYRRG) are cytoplasmic. The helical transmembrane segment at 42–62 (VAIFDLILRVSAATSALAATI) threads the bilayer. Residues 63-89 (TMGTTEQTLPFFTQFFQFQASYDDLPA) are Extracellular-facing. Residues 90-110 (FTFFVIALSIVTGYLVLSVPF) traverse the membrane as a helical segment. Over 111–131 (SVVCIAQPLAAVPRLLLIVCD) the chain is Cytoplasmic. A helical membrane pass occupies residues 132–152 (TLTVTLATAAASSSAAIVYLA). Residues 153–221 (HNGNADANWL…HYWDRRWCEI (69 aa)) are Extracellular-facing.

This sequence belongs to the Casparian strip membrane proteins (CASP) family. As to quaternary structure, homodimer and heterodimers.

It localises to the cell membrane. Its function is as follows. Regulates membrane-cell wall junctions and localized cell wall deposition. Required for establishment of the Casparian strip membrane domain (CSD) and the subsequent formation of Casparian strips, a cell wall modification of the root endodermis that determines an apoplastic barrier between the intraorganismal apoplasm and the extraorganismal apoplasm and prevents lateral diffusion. The protein is Casparian strip membrane protein 2 of Erythranthe guttata (Yellow monkey flower).